The following is a 430-amino-acid chain: Glutamate-1-semialdehyde 2,1-aminomutase (430 aa).

Lysine 265 bears the N6-(pyridoxal phosphate)lysine mark.

Belongs to the class-III pyridoxal-phosphate-dependent aminotransferase family. HemL subfamily. As to quaternary structure, homodimer. The cofactor is pyridoxal 5'-phosphate.

The protein localises to the cytoplasm. It carries out the reaction (S)-4-amino-5-oxopentanoate = 5-aminolevulinate. It participates in porphyrin-containing compound metabolism; protoporphyrin-IX biosynthesis; 5-aminolevulinate from L-glutamyl-tRNA(Glu): step 2/2. This chain is Glutamate-1-semialdehyde 2,1-aminomutase, found in Shewanella sp. (strain MR-7).